We begin with the raw amino-acid sequence, 623 residues long: Prothrombin (623 aa).

The N-terminal stretch at 1–24 (MAHVRGLQLPGCLALAALCTLVHS) is a signal peptide. The propeptide occupies 25-43 (QHVFLAPQQALSLLQRVRR). A Gla domain is found at 44-90 (ANSVFLEEVRKGNLERECVEETCSYEEAFEALESSTATDVFWAKYTA). Residues E50, E51, E58, E60, E63, E64, E69, E70, E73, and E76 each carry the 4-carboxyglutamate modification. The cysteines at positions 61 and 66 are disulfide-linked. 11 disulfides stabilise this stretch: C91/C104, C109/C187, C130/C170, C158/C182, C214/C292, C235/C275, C263/C287, C337/C483, C392/C408, C537/C551, and C565/C595. 2 Kringle domains span residues 108–187 (NCAE…IPVC) and 213–292 (QCVP…LNYC). N122 and N144 each carry an N-linked (GlcNAc...) asparagine glycan. Residues 365-619 (IVEGSDAEIG…LKKWIQKVID (255 aa)) form the Peptidase S1 domain. H407 acts as the Charge relay system in catalysis. Residue N417 is glycosylated (N-linked (GlcNAc...) asparagine). D463 (charge relay system) is an active-site residue. Residues 552-574 (AGYKPDEGKRGDACEGDSGGPFV) are high affinity receptor-binding region which also known as the TP508 peptide. S569 (charge relay system) is an active-site residue.

This sequence belongs to the peptidase S1 family. Heterodimer (named alpha-thrombin) of a light and a heavy chain; disulfide-linked. Forms a heterodimer with SERPINA5. In plasma, interacts (via N-terminus) with alpha-1-microglobulin; this interaction does not prevent the activation of prothrombin to thrombin. Post-translationally, the gamma-carboxyglutamyl residues, which bind calcium ions, result from the carboxylation of glutamyl residues by a microsomal enzyme, the vitamin K-dependent carboxylase. The modified residues are necessary for the calcium-dependent interaction with a negatively charged phospholipid surface, which is essential for the conversion of prothrombin to thrombin. In terms of processing, in the penultimate step of the coagulation cascade, prothrombin is converted to thrombin by the prothrombinase complex composed of factor Xa (F10), cofactor Va (F5), and phospholipids. This activation requires factor Xa-catalyzed sequential cleavage at 2 sites, Arg-315 and Arg-364, along 2 possible pathways. In the first pathway, the first cleavage occurs at Arg-315, leading to the formation of the inactive intermediate prethrombin-2. This pathway preferentially occurs on platelets and in the absence of cofactor Va. In the second pathway, the first cleavage occurs at Arg-364, which separates protease domain into 2 chains that remain connected through a disulfide bond and generates the active intermediate meizothrombin. The presence of cofactor Va directs activation along the meizothrombin pathway and greatly accelerates the rate of cleavage at Arg-364, but has a smaller effect on the cleavage of meizothrombin at Arg-315. Meizothrombin accumulates as an intermediate when prothrombinase is assembled on the membrane of red blood cells.

It carries out the reaction Selective cleavage of Arg-|-Gly bonds in fibrinogen to form fibrin and release fibrinopeptides A and B.. With respect to regulation, activity is promoted in the presence of negatively charged surfaces, such as polyphosphate and dextran sulfate. Inhibited by SERPINA5. Thrombin, which cleaves bonds after Arg and Lys, converts fibrinogen to fibrin and activates factors V, VII, VIII, XIII, and, in complex with thrombomodulin, protein C. Functions in blood homeostasis, inflammation and wound healing. Activates coagulation factor XI (F11); activation is promoted by the contact with negatively charged surfaces. Triggers the production of pro-inflammatory cytokines, such as MCP-1/CCL2 and IL8/CXCL8, in endothelial cells. The sequence is that of Prothrombin (F2) from Pongo abelii (Sumatran orangutan).